We begin with the raw amino-acid sequence, 162 residues long: MRLDQVARSLLLKEFVSGFALAMRYLFKPKATINYPFEMGHRSPRFRGEHALRRYPNGEERCIACKLCEAVCPAQAITIEAGPRRNDGTRRTTRYDIDMVKCIYCGMCQEACPVDAIVEGPNFEFSVETREELLYDKQRLLANGDRWEREIARNIAADAPYR.

2 consecutive 4Fe-4S ferredoxin-type domains span residues 52–82 (LRRY…IEAG) and 93–122 (TRYD…EGPN). C62, C65, C68, C72, C102, C105, C108, and C112 together coordinate [4Fe-4S] cluster.

The protein belongs to the complex I 23 kDa subunit family. In terms of assembly, NDH-1 is composed of 14 different subunits. Subunits NuoA, H, J, K, L, M, N constitute the membrane sector of the complex. Requires [4Fe-4S] cluster as cofactor.

The protein localises to the cell inner membrane. It catalyses the reaction a quinone + NADH + 5 H(+)(in) = a quinol + NAD(+) + 4 H(+)(out). Functionally, NDH-1 shuttles electrons from NADH, via FMN and iron-sulfur (Fe-S) centers, to quinones in the respiratory chain. The immediate electron acceptor for the enzyme in this species is believed to be ubiquinone. Couples the redox reaction to proton translocation (for every two electrons transferred, four hydrogen ions are translocated across the cytoplasmic membrane), and thus conserves the redox energy in a proton gradient. This is NADH-quinone oxidoreductase subunit I from Methylobacterium sp. (strain 4-46).